The sequence spans 251 residues: Ubiquinone/menaquinone biosynthesis C-methyltransferase UbiE (251 aa).

Residues Thr74, Asp95, 123 to 124 (NA), and Ser140 each bind S-adenosyl-L-methionine.

Belongs to the class I-like SAM-binding methyltransferase superfamily. MenG/UbiE family.

The catalysed reaction is a 2-demethylmenaquinol + S-adenosyl-L-methionine = a menaquinol + S-adenosyl-L-homocysteine + H(+). It catalyses the reaction a 2-methoxy-6-(all-trans-polyprenyl)benzene-1,4-diol + S-adenosyl-L-methionine = a 5-methoxy-2-methyl-3-(all-trans-polyprenyl)benzene-1,4-diol + S-adenosyl-L-homocysteine + H(+). The protein operates within quinol/quinone metabolism; menaquinone biosynthesis; menaquinol from 1,4-dihydroxy-2-naphthoate: step 2/2. It functions in the pathway cofactor biosynthesis; ubiquinone biosynthesis. Its function is as follows. Methyltransferase required for the conversion of demethylmenaquinol (DMKH2) to menaquinol (MKH2) and the conversion of 2-polyprenyl-6-methoxy-1,4-benzoquinol (DDMQH2) to 2-polyprenyl-3-methyl-6-methoxy-1,4-benzoquinol (DMQH2). In Photorhabdus laumondii subsp. laumondii (strain DSM 15139 / CIP 105565 / TT01) (Photorhabdus luminescens subsp. laumondii), this protein is Ubiquinone/menaquinone biosynthesis C-methyltransferase UbiE.